Consider the following 288-residue polypeptide: ATP synthase gamma chain (288 aa).

This sequence belongs to the ATPase gamma chain family. As to quaternary structure, F-type ATPases have 2 components, CF(1) - the catalytic core - and CF(0) - the membrane proton channel. CF(1) has five subunits: alpha(3), beta(3), gamma(1), delta(1), epsilon(1). CF(0) has three main subunits: a, b and c.

The protein resides in the cell inner membrane. Functionally, produces ATP from ADP in the presence of a proton gradient across the membrane. The gamma chain is believed to be important in regulating ATPase activity and the flow of protons through the CF(0) complex. The protein is ATP synthase gamma chain of Stutzerimonas stutzeri (strain A1501) (Pseudomonas stutzeri).